A 123-amino-acid polypeptide reads, in one-letter code: Defensin beta 118 (123 aa).

The N-terminal stretch at 1 to 19 (MKLLLLALPMLVLLPQVIP) is a signal peptide. 3 disulfides stabilise this stretch: C27–C54, C34–C48, and C38–C55. The propeptide occupies 65 to 123 (VPTTSPTPLSDSTRGVIDDILTVRFTTDYFEVSSKKNMVEESEVGQGTQTSLPNVHHSS). Residues 100 to 123 (KNMVEESEVGQGTQTSLPNVHHSS) form a disordered region. Positions 109-123 (GQGTQTSLPNVHHSS) are enriched in polar residues.

The protein belongs to the beta-defensin family. The three-dimensional structure formed by the three intramolecular disulfide bridges is indispensable for antimicrobial activity.

It is found in the secreted. Functionally, host defense peptide that exhibits antimicrobial activity against both Gram-negative bacteria, such as E.coli and S.typhimurium, and Gram-positive bacteria, such as S.aureus and B.subtilis. Inhibits cell adhesion of E.coli on intestinal epithelial enterocytes. Causes rapid permeabilization of both the outer and inner membrane of E.coli, leading to morphological alterations on the bacterial surface. Binds to bacterial lipopolysaccharides (LPS) with high affinity, and may thereby be involved in immunoregulation through LPS neutralization. May contribute to epididymal innate immunity and protect the sperm against attack by microorganisms. This chain is Defensin beta 118 (DEFB118), found in Pongo pygmaeus (Bornean orangutan).